A 259-amino-acid chain; its full sequence is Hemin import ATP-binding protein HmuV (259 aa).

An ABC transporter domain is found at 8–242 (ISANNISYRI…KMIENVYGHK (235 aa)). 40–47 (GPNGAGKS) is a binding site for ATP.

This sequence belongs to the ABC transporter superfamily. Heme (hemin) importer (TC 3.A.1.14.5) family. As to quaternary structure, the complex is composed of two ATP-binding proteins (HmuV), two transmembrane proteins (HmuU) and a solute-binding protein (HmuT).

The protein localises to the cell inner membrane. Its function is as follows. Part of the ABC transporter complex HmuTUV involved in hemin import. Responsible for energy coupling to the transport system. This chain is Hemin import ATP-binding protein HmuV, found in Aliivibrio fischeri (strain ATCC 700601 / ES114) (Vibrio fischeri).